A 370-amino-acid polypeptide reads, in one-letter code: uncharacterized protein (370 aa).

10 helical membrane-spanning segments follow: residues 6-26, 49-69, 79-99, 111-131, 143-163, 167-187, 206-226, 236-256, 307-327, and 333-353; these read AVVF…CLGN, IGIV…VAPF, SFAN…GEMA, FLGT…LGII, ILIG…CAGF, MIGK…FGLW, MVAI…IVLI, IQTT…TAFI, VAFA…VAGM, and AAMI…AAWM.

The protein belongs to the EutH family.

It is found in the cell membrane. This is an uncharacterized protein from Bacillus subtilis (strain 168).